Reading from the N-terminus, the 612-residue chain is MDIKKLKDYQNHIRNFSIVAHIDHGKSTIADRILELTDTVSERQLKNQMLDDMPLERQRGITIKMNSVEVKYHAKNGEDYIFHLIDTPGHVDFSYEVSRSLAACEGALLVVDASQGVQAQTLANTYLAIDDDLEIVPVINKIDLPSADPENAKEEIEEMLGLDASDAVEVSGKTGQGIPELLEKIVTDIPAPSGDIEAPLKALIFDSKYDDYRGVVLSVRIEDGTVKPGDKIQIMNTGKEYEVTEVGVSSPHPVKKDILIAGDVGYITANIKSVRETRVGDTITDAGHPTAEPLPGYRQIPPMVYSGMYPVDNRDYDDLKEALQKLQLNDAALEFEPETSTALGFGFRCGFLGLLHMDVVQERLEQEFDLDLIMTAPSVDYHAIMNDGTTKVIDNPSDLPDAGEYKEVQEPYVKAEIMVPNDYVGPVMELCQRKRGEFVTMDYLDKYRVNVIYNMPLAEIIFDFFDDLKSSTKGYASLDYEITGYRATDLVKIDILLNKEPIDALSFIAHRSEAQDRARQMTSMLKKLIPRQNFEVDIQGAIGAKIISRATIKPYRKDVTWKIHTGDPDRRAKLLEKQKRGKKRMKAVGRVEVPQDAFMAVLKMNDDDIKGK.

A tr-type G domain is found at 11 to 193 (NHIRNFSIVA…KIVTDIPAPS (183 aa)). GTP-binding positions include 23 to 28 (DHGKST) and 140 to 143 (NKID).

It belongs to the TRAFAC class translation factor GTPase superfamily. Classic translation factor GTPase family. LepA subfamily.

The protein localises to the cell membrane. It catalyses the reaction GTP + H2O = GDP + phosphate + H(+). Required for accurate and efficient protein synthesis under certain stress conditions. May act as a fidelity factor of the translation reaction, by catalyzing a one-codon backward translocation of tRNAs on improperly translocated ribosomes. Back-translocation proceeds from a post-translocation (POST) complex to a pre-translocation (PRE) complex, thus giving elongation factor G a second chance to translocate the tRNAs correctly. Binds to ribosomes in a GTP-dependent manner. The polypeptide is Elongation factor 4 (Lactobacillus acidophilus (strain ATCC 700396 / NCK56 / N2 / NCFM)).